Here is a 368-residue protein sequence, read N- to C-terminus: tRNA 2-selenouridine synthase (368 aa).

Residues Phe12–Glu136 enclose the Rhodanese domain. The active-site S-selanylcysteine intermediate is the Cys95.

Belongs to the SelU family. As to quaternary structure, monomer.

It carries out the reaction 5-methylaminomethyl-2-thiouridine(34) in tRNA + selenophosphate + (2E)-geranyl diphosphate + H2O + H(+) = 5-methylaminomethyl-2-selenouridine(34) in tRNA + (2E)-thiogeraniol + phosphate + diphosphate. The catalysed reaction is 5-methylaminomethyl-2-thiouridine(34) in tRNA + (2E)-geranyl diphosphate = 5-methylaminomethyl-S-(2E)-geranyl-thiouridine(34) in tRNA + diphosphate. It catalyses the reaction 5-methylaminomethyl-S-(2E)-geranyl-thiouridine(34) in tRNA + selenophosphate + H(+) = 5-methylaminomethyl-2-(Se-phospho)selenouridine(34) in tRNA + (2E)-thiogeraniol. The enzyme catalyses 5-methylaminomethyl-2-(Se-phospho)selenouridine(34) in tRNA + H2O = 5-methylaminomethyl-2-selenouridine(34) in tRNA + phosphate. Its function is as follows. Involved in the post-transcriptional modification of the uridine at the wobble position (U34) of tRNA(Lys), tRNA(Glu) and tRNA(Gln). Catalyzes the conversion of 2-thiouridine (S2U-RNA) to 2-selenouridine (Se2U-RNA). Acts in a two-step process involving geranylation of 2-thiouridine (S2U) to S-geranyl-2-thiouridine (geS2U) and subsequent selenation of the latter derivative to 2-selenouridine (Se2U) in the tRNA chain. This Bordetella bronchiseptica (strain ATCC BAA-588 / NCTC 13252 / RB50) (Alcaligenes bronchisepticus) protein is tRNA 2-selenouridine synthase.